A 211-amino-acid chain; its full sequence is MKLWDVVAVCLVLLHTASAFPLPAGKRPPEAPAEDRSLGRRRAPFALSSDSNMPEDYPDQFDDVMDFIQATIKRLKRSPDKQMAVLPRRERNRQAAAANPENSRGKGRRGQRGKNRGCVLTAIHLNVTDLGLGYETKEELIFRYCSGSCDAAETTYDKILKNLSRNRRLVSDKVGQACCRPIAFDDDLSFLDDNLVYHILRKHSAKRCGCI.

The signal sequence occupies residues 1–19 (MKLWDVVAVCLVLLHTASA). A propeptide spanning residues 20 to 75 (FPLPAGKRPPEAPAEDRSLGRRRAPFALSSDSNMPEDYPDQFDDVMDFIQATIKRL) is cleaved from the precursor. 2 disordered regions span residues 21-56 (PLPAGKRPPEAPAEDRSLGRRRAPFALSSDSNMPED) and 78-113 (SPDKQMAVLPRRERNRQAAAANPENSRGKGRRGQRG). Residues 27-38 (RPPEAPAEDRSL) show a composition bias toward basic and acidic residues. 3 disulfide bridges follow: Cys118/Cys179, Cys145/Cys208, and Cys149/Cys210. 2 N-linked (GlcNAc...) asparagine glycosylation sites follow: Asn126 and Asn162.

This sequence belongs to the TGF-beta family. GDNF subfamily. In terms of assembly, homodimer; disulfide-linked. Interacts with GFRA1 coreceptor and RET: forms a 2:2:2 ternary complex composed of GDNF ligand, GFRA1 and RET receptor. Interacts (via propeptide) with SORL1 (via N-terminal ectodomain); this interaction affects GDNF-regulated, but not constitutive secretion. Also interacts with SORL1 in complex with GFRA1; this interaction leads to GDNF endocytosis and lysosomal degradation. In the brain, predominantly expressed in the striatum with highest levels in the caudate and lowest in the putamen. Isoform 2 is absent from most tissues except for low levels in intestine and kidney. Highest expression of isoform 3 is found in pancreatic islets. Isoform 5 is expressed at very low levels in putamen, nucleus accumbens, prefrontal cortex, amygdala, hypothalamus and intestine. Isoform 3 is up-regulated in the middle temporal gyrus of Alzheimer disease patients while isoform 2 shows no change.

It is found in the secreted. Its function is as follows. Neurotrophic factor that enhances survival and morphological differentiation of dopaminergic neurons and increases their high-affinity dopamine uptake. Acts by binding to its coreceptor, GFRA1, leading to autophosphorylation and activation of the RET receptor. Involved in the development of the neural crest. This is Glial cell line-derived neurotrophic factor (GDNF) from Homo sapiens (Human).